We begin with the raw amino-acid sequence, 234 residues long: MNKEVEVRNLGIKDYKETWDYQENIFKETVDLKIKNRREGTEIPTRNYFLFVEHPHVYTLGKSGDAENLLISEKELKAKNATFYKINRGGDITYHGPGQIVGYPILDLDNFFTDIHKYLRLLEEAVILTLSEYGLKSERSPGETGVWLDVGTPFARKICAMGVRASRWVTMHGFALNVNADLGYFDNIIPCGIKGKAVTSLNVELGQKEINLEEVQEKLLKHFQELFQAELKYQ.

Positions 43 to 231 constitute a BPL/LPL catalytic domain; sequence IPTRNYFLFV…HFQELFQAEL (189 aa). Substrate contacts are provided by residues 88–95, 160–162, and 173–175; these read RGGDITYH, AMG, and GFA. Cysteine 191 acts as the Acyl-thioester intermediate in catalysis.

This sequence belongs to the LipB family.

It localises to the cytoplasm. It catalyses the reaction octanoyl-[ACP] + L-lysyl-[protein] = N(6)-octanoyl-L-lysyl-[protein] + holo-[ACP] + H(+). It participates in protein modification; protein lipoylation via endogenous pathway; protein N(6)-(lipoyl)lysine from octanoyl-[acyl-carrier-protein]: step 1/2. Its function is as follows. Catalyzes the transfer of endogenously produced octanoic acid from octanoyl-acyl-carrier-protein onto the lipoyl domains of lipoate-dependent enzymes. Lipoyl-ACP can also act as a substrate although octanoyl-ACP is likely to be the physiological substrate. The protein is Octanoyltransferase of Christiangramia forsetii (strain DSM 17595 / CGMCC 1.15422 / KT0803) (Gramella forsetii).